The following is a 431-amino-acid chain: Adenylosuccinate synthetase (431 aa).

GTP contacts are provided by residues Gly12–Lys18 and Gly40–Thr42. Catalysis depends on Asp13, which acts as the Proton acceptor. Mg(2+) contacts are provided by Asp13 and Gly40. Residues Asp13–Lys16, Asn38–His41, Thr128, Arg142, Gln223, Thr238, and Arg301 each bind IMP. His41 (proton donor) is an active-site residue. Thr297–Arg303 lines the substrate pocket. Residues Arg303, Ser329–Asp331, and Ser411–Gly413 contribute to the GTP site.

This sequence belongs to the adenylosuccinate synthetase family. In terms of assembly, homodimer. Requires Mg(2+) as cofactor.

The protein localises to the cytoplasm. It carries out the reaction IMP + L-aspartate + GTP = N(6)-(1,2-dicarboxyethyl)-AMP + GDP + phosphate + 2 H(+). It participates in purine metabolism; AMP biosynthesis via de novo pathway; AMP from IMP: step 1/2. In terms of biological role, plays an important role in the de novo pathway of purine nucleotide biosynthesis. Catalyzes the first committed step in the biosynthesis of AMP from IMP. The polypeptide is Adenylosuccinate synthetase (Lacticaseibacillus paracasei (strain ATCC 334 / BCRC 17002 / CCUG 31169 / CIP 107868 / KCTC 3260 / NRRL B-441) (Lactobacillus paracasei)).